A 151-amino-acid chain; its full sequence is Protein ECM12 (151 aa).

The N-linked (GlcNAc...) asparagine glycan is linked to Asn-2. A run of 2 helical transmembrane segments spans residues Leu-17–Phe-37 and Ala-51–Phe-71. 2 N-linked (GlcNAc...) asparagine glycosylation sites follow: Asn-132 and Asn-137.

The protein resides in the membrane. Functionally, may be involved in cell wall organization and biogenesis. In Saccharomyces cerevisiae (strain ATCC 204508 / S288c) (Baker's yeast), this protein is Protein ECM12 (ECM12).